A 795-amino-acid polypeptide reads, in one-letter code: Protocadherin beta-4 (795 aa).

The N-terminal stretch at 1-27 (MKKLGRIHPNRQVLAFILMVFLSQVRL) is a signal peptide. Topologically, residues 28–689 (EPIRYSVLEE…SQADSLTVYL (662 aa)) are extracellular. 5 Cadherin domains span residues 34–132 (VLEE…SPVF), 137–241 (VLLK…APEF), 246–346 (YGVQ…PPEL), 351–450 (LTSS…APAF), and 455–560 (YTLF…SPFV). Asn183 is a glycosylation site (N-linked (GlcNAc...) asparagine). A glycan (N-linked (GlcNAc...) asparagine) is linked at Asn417. Asn566 carries N-linked (GlcNAc...) asparagine glycosylation. A Cadherin 6 domain is found at 567–670 (GSAPCTELVP…LVDGFSQPYL (104 aa)). The chain crosses the membrane as a helical span at residues 690–710 (VVALASVSSLFLFSVLLFVAV). At 711–795 (RLCRRSRAAS…PKFRNSLVFS (85 aa)) the chain is on the cytoplasmic side.

The protein localises to the cell membrane. In terms of biological role, potential calcium-dependent cell-adhesion protein. May be involved in the establishment and maintenance of specific neuronal connections in the brain. The protein is Protocadherin beta-4 (PCDHB4) of Pan troglodytes (Chimpanzee).